A 231-amino-acid chain; its full sequence is MSENTDSTHEKLIFAPSRYQYEKSSLHRDALMGKDPLVLFNQWFQEATDDEGIKSPESTTLSTARLPSGRVSSRLVLLKELDHRGFIIFTNLGTSKKAKDLKSNPYASLSFWWEPLQRQVRVEGIIERLSREETEEYFKTRPRNSRIGAWASPQSEVIADREELEKRVEEYKKKFGEDESVPVPVPDFWGGIRIVPLEIEFWQGGKYRLHDRFSFRRNTLDEDYELVRLAP.

20 to 23 (QYEK) is a binding site for pyridoxal 5'-phosphate. 74–77 (RLVL) contacts FMN. Lys-79 is a binding site for pyridoxal 5'-phosphate. Residues 89–90 (FT), 96–97 (KK), and Gln-119 contribute to the FMN site. Pyridoxal 5'-phosphate contacts are provided by Tyr-137, Arg-141, and Ser-145. Residues 154 to 155 (QS) and Trp-202 contribute to the FMN site. 208 to 210 (RLH) lines the pyridoxal 5'-phosphate pocket. Residue Arg-212 participates in FMN binding.

The protein belongs to the pyridoxamine 5'-phosphate oxidase family. As to quaternary structure, homodimer. The cofactor is FMN.

It catalyses the reaction pyridoxamine 5'-phosphate + O2 + H2O = pyridoxal 5'-phosphate + H2O2 + NH4(+). The catalysed reaction is pyridoxine 5'-phosphate + O2 = pyridoxal 5'-phosphate + H2O2. It functions in the pathway cofactor metabolism; pyridoxal 5'-phosphate salvage; pyridoxal 5'-phosphate from pyridoxamine 5'-phosphate: step 1/1. The protein operates within cofactor metabolism; pyridoxal 5'-phosphate salvage; pyridoxal 5'-phosphate from pyridoxine 5'-phosphate: step 1/1. In terms of biological role, catalyzes the oxidation of either pyridoxine 5'-phosphate (PNP) or pyridoxamine 5'-phosphate (PMP) into pyridoxal 5'-phosphate (PLP). This Schizosaccharomyces pombe (strain 972 / ATCC 24843) (Fission yeast) protein is Probable pyridoxamine 5'-phosphate oxidase.